We begin with the raw amino-acid sequence, 218 residues long: Ribosomal RNA large subunit methyltransferase E (218 aa).

S-adenosyl-L-methionine is bound by residues G64, W66, D92, D108, and D133. K173 acts as the Proton acceptor in catalysis.

The protein belongs to the class I-like SAM-binding methyltransferase superfamily. RNA methyltransferase RlmE family.

It localises to the cytoplasm. The enzyme catalyses uridine(2552) in 23S rRNA + S-adenosyl-L-methionine = 2'-O-methyluridine(2552) in 23S rRNA + S-adenosyl-L-homocysteine + H(+). In terms of biological role, specifically methylates the uridine in position 2552 of 23S rRNA at the 2'-O position of the ribose in the fully assembled 50S ribosomal subunit. The protein is Ribosomal RNA large subunit methyltransferase E of Paracidovorax citrulli (strain AAC00-1) (Acidovorax citrulli).